A 900-amino-acid chain; its full sequence is Exosome complex component 10 homolog (900 aa).

Disordered regions lie at residues 1–31 (MPRT…SEDV) and 147–174 (TSIE…TGTP). Positions 8–28 (VHQEAKEESAQADQPPKKSAS) are enriched in basic and acidic residues. Residues 273–438 (VVDTVEKLKQ…YVYGRMTNDL (166 aa)) enclose the 3'-5' exonuclease domain. The Mg(2+) site is built by Asp-296, Glu-298, Asp-354, and Asp-423. Residues 485-565 (DNRQLYALRG…LKARDQPLVK (81 aa)) enclose the HRDC domain. The interval 731–900 (EQLKRKHPQA…FSNVRKEGKK (170 aa)) is disordered. Positions 809 to 826 (RKQKKNQFQRGFKAKNRG) are enriched in basic residues. The span at 878 to 887 (NNRNNKQFNK) shows a compositional bias: low complexity.

Belongs to the exosome component 10/RRP6 family. In terms of assembly, component of the RNA exosome complex. Interacts with spn-A/Rad51; the interaction is required for the recruitment of spn-A to the DNA-damage response foci. Interacts with Su(var)3-9, a heterochromatin factor; the interaction promotes association of Rrp6 with a subset of genomic loci. Interacts with Su(var)205, a heterochromatin factor. Interacts with HDAC1, a heterochromatin factor. The cofactor is Mg(2+). In terms of tissue distribution, salivary gland (at protein level).

The protein localises to the nucleus. It is found in the chromosome. Its subcellular location is the cytoplasm. The protein resides in the cell cortex. It localises to the cytoskeleton. The protein localises to the microtubule organizing center. It is found in the centrosome. Its subcellular location is the spindle. The protein resides in the midbody. Functionally, catalytic component of the RNA exosome complex which has 3'-&gt;5' exoribonuclease activity and participates in a multitude of cellular RNA processing and degradation events. Degrades a large variety of non-coding RNAs that are processed by the exosome, such as pre-rRNAs and some small nucleolar RNAs (snoRNAs). Degrades transcripts derived from different types of heterochromatic repeats, such as subtelomeric minisatellites and simple gagaa repeats. Degrades transcripts derived from transposons and transposon fragments. Degrades chromatin-associated transcripts and contributes to the compaction of heterochromatin. Required for the efficient repair of DNA double-strand breaks via homologous recombination after irradiation. Required for cell proliferation and error-free mitosis. This chain is Exosome complex component 10 homolog, found in Drosophila melanogaster (Fruit fly).